The chain runs to 195 residues: N-(5'-phosphoribosyl)anthranilate isomerase (195 aa).

The protein belongs to the TrpF family.

It carries out the reaction N-(5-phospho-beta-D-ribosyl)anthranilate = 1-(2-carboxyphenylamino)-1-deoxy-D-ribulose 5-phosphate. Its pathway is amino-acid biosynthesis; L-tryptophan biosynthesis; L-tryptophan from chorismate: step 3/5. The chain is N-(5'-phosphoribosyl)anthranilate isomerase from Methanoregula boonei (strain DSM 21154 / JCM 14090 / 6A8).